We begin with the raw amino-acid sequence, 116 residues long: MNLITTIITITITLSAVLATVSFWLPQISPDAEKLSPYECGFDPLGSARLPFSLRFFLIAILFLLFDLEIALLLPLPWGDQLNTPTLTLVWSTAVLALLTLGLIYEWTQGGLEWAE.

Transmembrane regions (helical) follow at residues 3-23 (LITT…TVSF), 56-76 (FFLI…LLPL), and 87-107 (LTLV…IYEW).

It belongs to the complex I subunit 3 family.

It localises to the mitochondrion membrane. The enzyme catalyses a ubiquinone + NADH + 5 H(+)(in) = a ubiquinol + NAD(+) + 4 H(+)(out). In terms of biological role, core subunit of the mitochondrial membrane respiratory chain NADH dehydrogenase (Complex I) that is believed to belong to the minimal assembly required for catalysis. Complex I functions in the transfer of electrons from NADH to the respiratory chain. The immediate electron acceptor for the enzyme is believed to be ubiquinone. In Oncorhynchus kisutch (Coho salmon), this protein is NADH-ubiquinone oxidoreductase chain 3 (MT-ND3).